The primary structure comprises 269 residues: NAD kinase (269 aa).

Catalysis depends on D45, which acts as the Proton acceptor. NAD(+)-binding positions include 45-46, 121-122, R147, D149, 160-165, and A184; these read DG, NE, and TAYNRS.

Belongs to the NAD kinase family. A divalent metal cation is required as a cofactor.

The protein resides in the cytoplasm. The enzyme catalyses NAD(+) + ATP = ADP + NADP(+) + H(+). Its function is as follows. Involved in the regulation of the intracellular balance of NAD and NADP, and is a key enzyme in the biosynthesis of NADP. Catalyzes specifically the phosphorylation on 2'-hydroxyl of the adenosine moiety of NAD to yield NADP. The polypeptide is NAD kinase (Pediococcus pentosaceus (strain ATCC 25745 / CCUG 21536 / LMG 10740 / 183-1w)).